Reading from the N-terminus, the 442-residue chain is Tryptophan synthase beta chain 2 (442 aa).

Lysine 110 bears the N6-(pyridoxal phosphate)lysine mark.

Belongs to the TrpB family. As to quaternary structure, tetramer of two alpha and two beta chains. Pyridoxal 5'-phosphate is required as a cofactor.

The catalysed reaction is (1S,2R)-1-C-(indol-3-yl)glycerol 3-phosphate + L-serine = D-glyceraldehyde 3-phosphate + L-tryptophan + H2O. Its pathway is amino-acid biosynthesis; L-tryptophan biosynthesis; L-tryptophan from chorismate: step 5/5. Its function is as follows. The beta subunit is responsible for the synthesis of L-tryptophan from indole and L-serine. In Thermococcus kodakarensis (strain ATCC BAA-918 / JCM 12380 / KOD1) (Pyrococcus kodakaraensis (strain KOD1)), this protein is Tryptophan synthase beta chain 2.